Consider the following 322-residue polypeptide: Protein-L-isoaspartate O-methyltransferase (322 aa).

Residues 1–101 (MSGERAKRFP…AKQGDRSAAP (101 aa)) form a disordered region. Residues 14–29 (EDLKREPRKPEGRVAE) are compositionally biased toward basic and acidic residues. Low complexity-rich tracts occupy residues 33–51 (AGDA…PAAA) and 76–91 (HAPA…PQGG). Serine 170 is a catalytic residue.

This sequence belongs to the methyltransferase superfamily. L-isoaspartyl/D-aspartyl protein methyltransferase family.

It localises to the cytoplasm. The catalysed reaction is [protein]-L-isoaspartate + S-adenosyl-L-methionine = [protein]-L-isoaspartate alpha-methyl ester + S-adenosyl-L-homocysteine. Its function is as follows. Catalyzes the methyl esterification of L-isoaspartyl residues in peptides and proteins that result from spontaneous decomposition of normal L-aspartyl and L-asparaginyl residues. It plays a role in the repair and/or degradation of damaged proteins. This chain is Protein-L-isoaspartate O-methyltransferase, found in Burkholderia pseudomallei (strain 1106a).